The sequence spans 209 residues: High frequency lysogenization protein HflD homolog (209 aa).

The stretch at 95–132 forms a coiled coil; sequence LERKLAASKGAMNTLGNRIADLSRQLEHFELESDTLMS.

This sequence belongs to the HflD family.

It is found in the cytoplasm. It localises to the cell inner membrane. The chain is High frequency lysogenization protein HflD homolog from Cronobacter sakazakii (strain ATCC BAA-894) (Enterobacter sakazakii).